We begin with the raw amino-acid sequence, 287 residues long: Sulfofructosephosphate aldolase (287 aa).

Catalysis depends on D82, which acts as the Proton donor. 2 residues coordinate Zn(2+): H83 and H180. G181 lines the dihydroxyacetone phosphate pocket. Position 208 (H208) interacts with Zn(2+). Dihydroxyacetone phosphate contacts are provided by residues G209 to S211 and N230 to T233.

This sequence belongs to the class II fructose-bisphosphate aldolase family. The cofactor is Zn(2+).

The enzyme catalyses 6-deoxy-6-sulfo-D-fructose 1-phosphate = (2S)-3-sulfolactaldehyde + dihydroxyacetone phosphate. Part of the sulfo-EMP2 pathway, a D-sulfoquinovose degradation pathway that produces sulfolactate (SL). Cleaves 6-deoxy-6-sulfo-D-fructose 1-phosphate (SFP) to form dihydroxyacetone phosphate (DHAP) and 3-sulfolactaldehyde (SLA). The sequence is that of Sulfofructosephosphate aldolase from Alkalicoccus urumqiensis (Bacillus urumqiensis).